Consider the following 213-residue polypeptide: Urease accessory protein UreG (213 aa).

Residue 17 to 24 (GPVGSGKT) coordinates GTP.

The protein belongs to the SIMIBI class G3E GTPase family. UreG subfamily. As to quaternary structure, homodimer. UreD, UreF and UreG form a complex that acts as a GTP-hydrolysis-dependent molecular chaperone, activating the urease apoprotein by helping to assemble the nickel containing metallocenter of UreC. The UreE protein probably delivers the nickel.

The protein localises to the cytoplasm. Facilitates the functional incorporation of the urease nickel metallocenter. This process requires GTP hydrolysis, probably effectuated by UreG. The sequence is that of Urease accessory protein UreG from Delftia acidovorans (strain DSM 14801 / SPH-1).